Reading from the N-terminus, the 182-residue chain is Methionine-R-sulfoxide reductase B2, mitochondrial (182 aa).

Residues 1-20 constitute a mitochondrion transit peptide; the sequence is MARLLWLLRGLTLGTAPRRA. The 130-residue stretch at 51–180 folds into the MsrB domain; sequence KSEWQKKLTP…NSVALKFKPR (130 aa). 4 residues coordinate Zn(2+): Cys90, Cys93, Cys146, and Cys149. The Nucleophile role is filled by Cys169.

Belongs to the MsrB Met sulfoxide reductase family. As to quaternary structure, interacts with DAOA; the interaction is direct. It depends on Zn(2+) as a cofactor. Ubiquitous. Detected in retina, ocular ciliary body, skeletal muscle, heart, colon, bone marrow, cerebellum, small intestine, fetal brain, fetal liver, kidney, spinal cord, lung, placenta and prostate.

The protein localises to the mitochondrion. It catalyses the reaction L-methionyl-[protein] + [thioredoxin]-disulfide + H2O = L-methionyl-(R)-S-oxide-[protein] + [thioredoxin]-dithiol. The enzyme catalyses [thioredoxin]-disulfide + L-methionine + H2O = L-methionine (R)-S-oxide + [thioredoxin]-dithiol. In terms of biological role, methionine-sulfoxide reductase that specifically reduces methionine (R)-sulfoxide back to methionine. While in many cases, methionine oxidation is the result of random oxidation following oxidative stress, methionine oxidation is also a post-translational modification that takes place on specific residue. Upon oxidative stress, may play a role in the preservation of mitochondrial integrity by decreasing the intracellular reactive oxygen species build-up through its scavenging role, hence contributing to cell survival and protein maintenance. This chain is Methionine-R-sulfoxide reductase B2, mitochondrial (MSRB2), found in Homo sapiens (Human).